The following is a 92-amino-acid chain: Large ribosomal subunit protein eL43 (92 aa).

Residues cysteine 39, cysteine 42, cysteine 57, and cysteine 60 each coordinate Zn(2+). The C4-type zinc finger occupies 39 to 60; the sequence is CPVCGFPKLKRASTSIWVCGKC.

Belongs to the eukaryotic ribosomal protein eL43 family. Putative zinc-binding subfamily. As to quaternary structure, part of the 50S ribosomal subunit. Requires Zn(2+) as cofactor.

Functionally, binds to the 23S rRNA. This chain is Large ribosomal subunit protein eL43, found in Methanocaldococcus jannaschii (strain ATCC 43067 / DSM 2661 / JAL-1 / JCM 10045 / NBRC 100440) (Methanococcus jannaschii).